Reading from the N-terminus, the 729-residue chain is Disintegrin and metalloproteinase domain-containing protein 21 (729 aa).

A signal peptide spans 1-39 (MECFIMLGADARTLMRVTLLLLWLKALPSLIDLSQTGST). Residues 40-209 (QYLSSPEVVI…MKQNYGKLWP (170 aa)) constitute a propeptide that is removed on maturation. N-linked (GlcNAc...) asparagine glycosylation occurs at asparagine 169. Positions 176-183 (MLCSLTEK) match the Cysteine switch motif. Position 178 (cysteine 178) interacts with Zn(2+). Residues 210-685 (HMWFLELAVV…DSGPTSQKRR (476 aa)) lie on the Extracellular side of the membrane. One can recognise a Peptidase M12B domain in the interval 212 to 402 (WFLELAVVVD…NQGTCLYNHP (191 aa)). Asparagine 231 carries an N-linked (GlcNAc...) asparagine glycan. Cystine bridges form between cysteine 320/cysteine 397, cysteine 360/cysteine 382, and cysteine 362/cysteine 367. Zn(2+) is bound at residue histidine 345. Residue glutamate 346 is part of the active site. Zn(2+) contacts are provided by histidine 349 and histidine 355. Residues asparagine 381, asparagine 441, and asparagine 482 are each glycosylated (N-linked (GlcNAc...) asparagine). Residues 410–496 (VKRCGNGMVE…QCPEDGYVQD (87 aa)) form the Disintegrin domain. Intrachain disulfides connect cysteine 468–cysteine 488, cysteine 638–cysteine 649, cysteine 643–cysteine 655, and cysteine 657–cysteine 666. The region spanning 638-667 (CLPETCNRKGVCNNKHHCHCDYGWSPPFCL) is the EGF-like domain. A helical membrane pass occupies residues 686–706 (VIITVLSITVPVLSILICLLI). Topologically, residues 707–729 (AGLYRIYCKIPSGPKETKASSPG) are cytoplasmic.

The cofactor is Zn(2+). In terms of processing, has no obvious cleavage site for furin endopeptidase, suggesting that the proteolytic processing is regulated. In terms of tissue distribution, highly expressed in Leydig cells. Expressed also in cauda epididymidis, vas deferens, convoluted tubules, kidney and the parietal cells of stomach. Not detected on developing spermatocytes or mature sperm.

The protein resides in the membrane. May be involved in sperm maturation and/or fertilization. May also be involved in epithelia functions associated with establishing and maintaining gradients of ions or nutrients. This is Disintegrin and metalloproteinase domain-containing protein 21 (Adam21) from Mus musculus (Mouse).